A 505-amino-acid chain; its full sequence is Maturase K (505 aa).

Belongs to the intron maturase 2 family. MatK subfamily.

It localises to the plastid. The protein localises to the chloroplast. Functionally, usually encoded in the trnK tRNA gene intron. Probably assists in splicing its own and other chloroplast group II introns. This Kunzea capitata (Pink kunzea) protein is Maturase K.